Consider the following 393-residue polypeptide: UDP-N-acetylglucosamine--N-acetylmuramyl-(pentapeptide) pyrophosphoryl-undecaprenol N-acetylglucosamine transferase (393 aa).

UDP-N-acetyl-alpha-D-glucosamine is bound by residues 14–16 (TAG), N128, R170, S210, and Q321.

Belongs to the glycosyltransferase 28 family. MurG subfamily.

Its subcellular location is the cell membrane. The catalysed reaction is di-trans,octa-cis-undecaprenyl diphospho-N-acetyl-alpha-D-muramoyl-L-alanyl-D-glutamyl-meso-2,6-diaminopimeloyl-D-alanyl-D-alanine + UDP-N-acetyl-alpha-D-glucosamine = di-trans,octa-cis-undecaprenyl diphospho-[N-acetyl-alpha-D-glucosaminyl-(1-&gt;4)]-N-acetyl-alpha-D-muramoyl-L-alanyl-D-glutamyl-meso-2,6-diaminopimeloyl-D-alanyl-D-alanine + UDP + H(+). It functions in the pathway cell wall biogenesis; peptidoglycan biosynthesis. Cell wall formation. Catalyzes the transfer of a GlcNAc subunit on undecaprenyl-pyrophosphoryl-MurNAc-pentapeptide (lipid intermediate I) to form undecaprenyl-pyrophosphoryl-MurNAc-(pentapeptide)GlcNAc (lipid intermediate II). The protein is UDP-N-acetylglucosamine--N-acetylmuramyl-(pentapeptide) pyrophosphoryl-undecaprenol N-acetylglucosamine transferase of Bifidobacterium adolescentis (strain ATCC 15703 / DSM 20083 / NCTC 11814 / E194a).